Here is a 261-residue protein sequence, read N- to C-terminus: Carbonic anhydrase 1 (261 aa).

Residues Met-1–Lys-40 are disordered. Ala-2 is subject to N-acetylalanine. The region spanning Pro-4–Phe-261 is the Alpha-carbonic anhydrase domain. His-65 serves as the catalytic Proton donor/acceptor. Positions 95, 97, and 120 each coordinate Zn(2+). Residues Thr-200 and Thr-200–His-201 contribute to the substrate site. The segment at Pro-241–Phe-261 is disordered.

This sequence belongs to the alpha-carbonic anhydrase family. Zn(2+) is required as a cofactor.

The protein resides in the cytoplasm. It carries out the reaction hydrogencarbonate + H(+) = CO2 + H2O. The catalysed reaction is urea = cyanamide + H2O. Its activity is regulated as follows. Inhibited by acetazolamide. In terms of biological role, catalyzes the reversible hydration of carbon dioxide. Can hydrate cyanamide to urea. The polypeptide is Carbonic anhydrase 1 (CA1) (Pan troglodytes (Chimpanzee)).